Reading from the N-terminus, the 570-residue chain is Urease subunit alpha (570 aa).

In terms of domain architecture, Urease spans 132–570 (GGIDTHVHFI…LPMAQRYFLF (439 aa)). Ni(2+)-binding residues include His-137 and His-139. His-139 and Ala-170 together coordinate substrate. Lys-220 provides a ligand contact to Ni(2+). Residue Lys-220 is modified to N6-carboxylysine. Positions 222 and 249 each coordinate substrate. Positions 249 and 275 each coordinate Ni(2+). The active-site Proton donor is the His-323. Asp-363 contacts Ni(2+). Ala-366 contributes to the substrate binding site.

It belongs to the metallo-dependent hydrolases superfamily. Urease alpha subunit family. In terms of assembly, heterotrimer of UreA (gamma), UreB (beta) and UreC (alpha) subunits. Three heterotrimers associate to form the active enzyme. Requires Ni cation as cofactor. Post-translationally, carboxylation allows a single lysine to coordinate two nickel ions.

It is found in the cytoplasm. The catalysed reaction is urea + 2 H2O + H(+) = hydrogencarbonate + 2 NH4(+). It functions in the pathway nitrogen metabolism; urea degradation; CO(2) and NH(3) from urea (urease route): step 1/1. Inhibited by fluoride. The sequence is that of Urease subunit alpha from Sporosarcina pasteurii (Bacillus pasteurii).